The chain runs to 334 residues: Hemin transport system permease protein HmuU (334 aa).

A run of 9 helical transmembrane segments spans residues 9–29 (LMLG…ANMG), 60–80 (LLAV…QGLF), 96–116 (AALC…LLAL), 117–137 (YSHM…IFTL), 149–169 (LLAG…LTYI), 191–211 (WSTL…GLLQ), 244–264 (AILI…GLVV), 278–298 (WLLP…DTLA), and 306–326 (EMPV…WLIL).

This sequence belongs to the binding-protein-dependent transport system permease family. FecCD subfamily.

The protein resides in the cell inner membrane. Part of the binding-protein-dependent transport system for hemin; probably responsible for the translocation of the substrate across the membrane. This is Hemin transport system permease protein HmuU (hmuU) from Yersinia pestis.